Reading from the N-terminus, the 676-residue chain is MEAHLANETKHALWHNDHTKGLLHVVIPNAGLIAAGIDPALLILKKPGQRFKVEVQTRYHATGQCEPWCQVFAAYIPDNALTNLLIPKTEPFVSHVFSATHNSGGLILSLPVYLSPGLFFDAFNVVAIRINTGNRKHRDICIMYAELIPNGTRYFADGQRVLLLCKQLIAYIRCTPRLASSIKIYAEHMVAAMGESHTSNGDNIGPVSSIIDLDRQLTSGGIDDSPAETRIQENNRDVLELIKRAVNIVNSRHPVRPSSSRVASGLLQSAKGHGAQTSNTDPINNGSFDGVLEPPGQGRFTGKKNNSSASIPPLQDVLLFTPASTEPQSLMEWFDICYAQLVSGDTPADFWKRRPLSIVPRHYAESPSPLIVVSYNGSSAWGGRITGSPILYHSAQAIIDAACINARVDNPQSLHVTARQELVARLPFLANVLNNQTPLPAFKPGAEMFLNQVFKQACVTSLTQGLITELQTNPTLQQLMEYDIADSSQTVIDEIVARTPDLIQTIVSVLTEMSMDAFYNSSLMYAVLAYLSSVYTRPQGGGYIPYLHASFPCWLGNRSIYLFDYYNSGGEILKLSKVPVPVALEKVGIGNSTQLRGKFIRSADIVDIGICSKYLPGQCYAYICLGFNQQLQSILVLPGGFAACFCITDTLQAALPASLIGPILDRFCFSIPNPHK.

The span at 253 to 264 (HPVRPSSSRVAS) shows a compositional bias: low complexity. The interval 253-308 (HPVRPSSSRVASGLLQSAKGHGAQTSNTDPINNGSFDGVLEPPGQGRFTGKKNNSS) is disordered. A compositionally biased stretch (polar residues) spans 275-287 (AQTSNTDPINNGS).

It belongs to the herpesviridae CVC1 protein family. As to quaternary structure, interacts (via C-terminus) with capsid vertex component 2/CVC2.

The protein resides in the virion. The protein localises to the host nucleus. In terms of biological role, capsid vertex-specific component that plays a role during viral DNA encapsidation, assuring correct genome cleavage and presumably stabilizing capsids that contain full-length viral genomes. The sequence is that of Capsid vertex component 1 from Varicella-zoster virus (strain Dumas) (HHV-3).